A 902-amino-acid chain; its full sequence is Protein translocase subunit SecA (902 aa).

Residues Gln87, 105–109, and Asp512 each bind ATP; that span reads GEGKT. The disordered stretch occupies residues 847-902; the sequence is DAERLARQQQLSHLDDQSAAAQEMASQTGDRKIGRNDPCPCGSGKKYKQCHGRLNA. Residues Cys885, Cys887, Cys896, and His897 each contribute to the Zn(2+) site. Over residues 891–902 the composition is skewed to basic residues; the sequence is KKYKQCHGRLNA.

It belongs to the SecA family. In terms of assembly, monomer and homodimer. Part of the essential Sec protein translocation apparatus which comprises SecA, SecYEG and auxiliary proteins SecDF-YajC and YidC. The cofactor is Zn(2+).

It localises to the cell inner membrane. It is found in the cytoplasm. It carries out the reaction ATP + H2O + cellular proteinSide 1 = ADP + phosphate + cellular proteinSide 2.. Part of the Sec protein translocase complex. Interacts with the SecYEG preprotein conducting channel. Has a central role in coupling the hydrolysis of ATP to the transfer of proteins into and across the cell membrane, serving both as a receptor for the preprotein-SecB complex and as an ATP-driven molecular motor driving the stepwise translocation of polypeptide chains across the membrane. The protein is Protein translocase subunit SecA of Edwardsiella ictaluri (strain 93-146).